The primary structure comprises 833 residues: MTFYDHTAIEPKWQAFWADNHTFKTGTDASKPKFYALDMFPYPSGAGLHVGHPEGYTATDILSRFKRAQGHNVLHPMGWDAFGLPAEQYAMDTGNDPAEFTAENIANFKRQINALGFSYDWDREVNTTDPNYYKWTQWIFTKLYEKGLAYEAEVPVNWVEELGTAIANEEVLPDGTSERGGYPVVRKPMRQWMLKITAYAERLLEDLEEVDWPESIKDMQRNWIGKSTGANVTFKVKDTDKDFTVFTTRPDTLFGATYAVLAPEHALVDAITTADQAEAVADYKRQASLKSDLARTDLAKEKTGVWTGSYAINPVNGNEMPVWIADYVLASYGTGAIMAVPAHDERDWEFAKQFNLDIIPVLEGGNVEEAAFTEDGLHINSGFLDGLDKASAIAKMVEWLEAEGVGNEKVTYRLRDWLFSRQRYWGEPIPIIHWEDGTSTAVPESELPLVLPVTKDIRPSGTGESPLANVTDWLEVTREDGVKGRRETNTMPQWAGSSWYYLRYIDPHNTEKLADEELLKQWLPVDIYVGGAEHAVLHLLYARFWHKVLYDLGVVPTKEPFQKLFNQGMILGTSYRDSRGALVATDKVEKRDGSFFHLETGEELEQAPAKMSKSLKNVVNPDDVVEQYGADTLRVYEMFMGPLDASIAWSEEGLEGSRKFLDRVYRLITTKEITEENSGALDKVYNETVKAVTEQVDQMKFNTAIAQLMVFVNAANKEDKLFSDYAKGFVQLIAPFAPHLGEELWQALTASGESISYVPWPSYDESKLVENDVEIVVQIKGKVKAKLVVAKDLSREELQEVALANEKVQAEIAGKDIIKVIAVPNKLVNIVIK.

The 'HIGH' region signature appears at 41–52 (PYPSGAGLHVGH). The 'KMSKS' region motif lies at 610–614 (KMSKS). Lys613 is an ATP binding site.

Belongs to the class-I aminoacyl-tRNA synthetase family.

It is found in the cytoplasm. It carries out the reaction tRNA(Leu) + L-leucine + ATP = L-leucyl-tRNA(Leu) + AMP + diphosphate. This is Leucine--tRNA ligase from Streptococcus pyogenes serotype M5 (strain Manfredo).